The following is a 155-amino-acid chain: uncharacterized protein (155 aa).

An N-terminal signal peptide occupies residues 1–24; it reads MQQLSKRRLSALFVTAFLPVTAFA.

This is an uncharacterized protein from Chromohalobacter salexigens (strain ATCC BAA-138 / DSM 3043 / CIP 106854 / NCIMB 13768 / 1H11).